We begin with the raw amino-acid sequence, 426 residues long: Glutamate-1-semialdehyde 2,1-aminomutase (426 aa).

Lys-265 carries the post-translational modification N6-(pyridoxal phosphate)lysine.

This sequence belongs to the class-III pyridoxal-phosphate-dependent aminotransferase family. HemL subfamily. As to quaternary structure, homodimer. The cofactor is pyridoxal 5'-phosphate.

It localises to the cytoplasm. It carries out the reaction (S)-4-amino-5-oxopentanoate = 5-aminolevulinate. Its pathway is porphyrin-containing compound metabolism; protoporphyrin-IX biosynthesis; 5-aminolevulinate from L-glutamyl-tRNA(Glu): step 2/2. The polypeptide is Glutamate-1-semialdehyde 2,1-aminomutase (Escherichia coli O7:K1 (strain IAI39 / ExPEC)).